The sequence spans 448 residues: Exodeoxyribonuclease 7 large subunit (448 aa).

The protein belongs to the XseA family. In terms of assembly, heterooligomer composed of large and small subunits.

The protein resides in the cytoplasm. The catalysed reaction is Exonucleolytic cleavage in either 5'- to 3'- or 3'- to 5'-direction to yield nucleoside 5'-phosphates.. In terms of biological role, bidirectionally degrades single-stranded DNA into large acid-insoluble oligonucleotides, which are then degraded further into small acid-soluble oligonucleotides. The sequence is that of Exodeoxyribonuclease 7 large subunit from Hamiltonella defensa subsp. Acyrthosiphon pisum (strain 5AT).